A 209-amino-acid chain; its full sequence is Orotate phosphoribosyltransferase (209 aa).

5-phospho-alpha-D-ribose 1-diphosphate-binding positions include arginine 96, lysine 100, histidine 102, and 122–130; that span reads EDLISTGGS. Position 126 (serine 126) interacts with orotate.

The protein belongs to the purine/pyrimidine phosphoribosyltransferase family. PyrE subfamily. In terms of assembly, homodimer. It depends on Mg(2+) as a cofactor.

The catalysed reaction is orotidine 5'-phosphate + diphosphate = orotate + 5-phospho-alpha-D-ribose 1-diphosphate. It participates in pyrimidine metabolism; UMP biosynthesis via de novo pathway; UMP from orotate: step 1/2. In terms of biological role, catalyzes the transfer of a ribosyl phosphate group from 5-phosphoribose 1-diphosphate to orotate, leading to the formation of orotidine monophosphate (OMP). The polypeptide is Orotate phosphoribosyltransferase (Listeria innocua serovar 6a (strain ATCC BAA-680 / CLIP 11262)).